Reading from the N-terminus, the 174-residue chain is Translationally-controlled tumor protein homolog 1 (174 aa).

The region spanning 1-174 (MRVFKDIVGY…FKDGLESVKY (174 aa)) is the TCTP domain.

The protein belongs to the TCTP family.

The protein localises to the cytoplasm. Involved in calcium binding and microtubule stabilization. The protein is Translationally-controlled tumor protein homolog 1 of Dictyostelium discoideum (Social amoeba).